Here is a 510-residue protein sequence, read N- to C-terminus: Coatomer subunit delta (510 aa).

Positions 270 to 510 (MESVHMKIEE…TFLVDKYEIL (241 aa)) constitute an MHD domain.

The protein belongs to the adaptor complexes medium subunit family. Delta-COP subfamily. In terms of assembly, oligomeric complex that consists of at least the alpha, beta, beta', gamma, delta, epsilon and zeta subunits.

Its subcellular location is the cytoplasm. It localises to the golgi apparatus membrane. It is found in the cytoplasmic vesicle. The protein localises to the COPI-coated vesicle membrane. Its function is as follows. The coatomer is a cytosolic protein complex that binds to dilysine motifs and reversibly associates with Golgi non-clathrin-coated vesicles, which further mediate biosynthetic protein transport from the ER, via the Golgi up to the trans Golgi network. Coatomer complex is required for budding from Golgi membranes, and is essential for the retrograde Golgi-to-ER transport of dilysine-tagged proteins. In mammals, the coatomer can only be recruited by membranes associated to ADP-ribosylation factors (ARFs), which are small GTP-binding proteins; the complex also influences the Golgi structural integrity, as well as the processing, activity, and endocytic recycling of LDL receptors. This chain is Coatomer subunit delta (ARCN1), found in Gallus gallus (Chicken).